The primary structure comprises 442 residues: Probable folate-biopterin transporter 7 (442 aa).

A run of 12 helical transmembrane segments spans residues 23-43 (LGFG…ANFF), 64-82 (LPMV…VYFF), 87-107 (IPYI…IAFL), 114-134 (ILAL…VEVA), 158-178 (FVWM…GIAI), 184-204 (QSTF…TINI), 241-261 (IAWI…MFFY), 270-290 (ASLL…WGFA), 302-322 (KLLT…LLFV), 335-355 (VYVL…ILPF), 379-399 (IALA…FVGV), and 410-430 (GLAI…WIYD).

This sequence belongs to the major facilitator superfamily. Folate-biopterin transporter (TC 2.A.71) family.

Its subcellular location is the membrane. Functionally, could mediate folate transport. The protein is Probable folate-biopterin transporter 7 of Arabidopsis thaliana (Mouse-ear cress).